The following is a 1175-amino-acid chain: Solute carrier family 9 member C1 (1175 aa).

Over 1–39 (MEMEEISENLTASHSIKLTNMWLELLKSVFLSTPQDLPE) the chain is Extracellular. A helical membrane pass occupies residues 40–59 (IILILSLICTVGAFLNMHLK). At 60-64 (DFPIP) the chain is on the cytoplasmic side. Residues 65–82 (LPVILFLIGCCFEILSFA) traverse the membrane as a helical segment. Residues 83–98 (STQIQIYADAIQWMDP) lie on the Extracellular side of the membrane. The chain crosses the membrane as a helical span at residues 99-115 (DIFFGIFTPVIIFNVAF). Residues 116 to 125 (DMDIYMLQKL) are Cytoplasmic-facing. The helical transmembrane segment at 126–151 (FWQILVITIPGFLINYTLILWYLQSV) threads the bilayer. A transport core domain region spans residues 126-213 (FWQILVITIP…SLVIYSGVVH (88 aa)). Residues 152 to 157 (NKLSLK) are Extracellular-facing. The chain crosses the membrane as a helical span at residues 158-183 (TVPWLLFSAVLISSDPMLTSASIRDL). At 184 to 186 (GLS) the chain is on the cytoplasmic side. The helical transmembrane segment at 187–212 (RSLTNLINGESLLTSVLSLVIYSGVV) threads the bilayer. Over 213 to 225 (HIRFKSKSVNHTL) the chain is Extracellular. A helical membrane pass occupies residues 226-257 (AHKVMSTAWSYIVESFITGIVFTKVIQLWMAT). Residues 258–261 (IFGD) are Cytoplasmic-facing. A helical membrane pass occupies residues 262–283 (DVNHITLIFSVLYLIFYVCELV). Residues 284–286 (GMS) lie on the Extracellular side of the membrane. A helical membrane pass occupies residues 287 to 300 (GIFTLATIGLFLNS). The Cytoplasmic portion of the chain corresponds to 301-307 (TSFKPGV). The helical transmembrane segment at 308–339 (EAFLLEFWNCLSFIGFLMVFTFIGLLIPAHTY) threads the bilayer. The Extracellular portion of the chain corresponds to 340-344 (LHISF). Residues 345 to 374 (SDVYYSLNIYFTLIVLRLLVFLLMSPILSR) traverse the membrane as a helical segment. Residues 345-446 (SDVYYSLNIY…FILPMAVTKL (102 aa)) form a transport core domain region. At 375-380 (LGHGFS) the chain is on the cytoplasmic side. Residues 381 to 411 (WRWAFIMVWSEMKGTPNINMALLLAYSDISL) form a helical membrane-spanning segment. At 412-415 (GSER) the chain is on the extracellular side. Residues 416–446 (ERSQILFHGVSVCVITLIVNRFILPMAVTKL) traverse the membrane as a helical segment. At 447–632 (GLRDVTSTKY…ACHRIVFTNE (186 aa)) the chain is on the cytoplasmic side. An ion transport-like region spans residues 618–698 (YMFLHACHRI…EFFSHTWLLF (81 aa)). A helical membrane pass occupies residues 633–653 (FEYTGYLVVLMSTYPMIICWI). Topologically, residues 654-657 (SRLK) are extracellular. Residues 658–684 (DIYDNEIKCANYYFLAFYILEALLKVA) form a helical membrane-spanning segment. Over 685–691 (AMRKEFF) the chain is Cytoplasmic. The helical transmembrane segment at 692 to 716 (SHTWLLFELGITLVGVLDIILIETD) threads the bilayer. Residues 717–724 (SISYNFDL) are Extracellular-facing. Residues 725 to 751 (TETVVFMNVIRLLRILRILKLVTPKLL) traverse the membrane as a helical segment. The Cytoplasmic portion of the chain corresponds to 752–1175 (QIIDKRMSQQ…EELIEENINI (424 aa)). A compositionally biased stretch (basic and acidic residues) spans 1137–1146 (MKPDSERESF). The disordered stretch occupies residues 1137–1175 (MKPDSERESFETLDETSEEDNGKKENQENEELIEENINI). Acidic residues predominate over residues 1164–1175 (ENEELIEENINI).

It belongs to the monovalent cation:proton antiporter 1 (CPA1) transporter (TC 2.A.36) family. Interacts with soluble adenylyl cyclase (sAC). Testis-specific. Specifically present in the principal piece of sperm tail (at protein level).

The protein localises to the cell projection. It localises to the cilium. It is found in the flagellum membrane. Functionally, sperm-specific solute carrier involved in intracellular pH regulation of spermatozoa. Required for sperm motility and fertility. Involved in sperm cell hyperactivation, a step needed for sperm motility which is essential late in the preparation of sperm for fertilization. Required for the expression and bicarbonate regulation of the soluble adenylyl cyclase (sAC). The sequence is that of Solute carrier family 9 member C1 (Slc9c1) from Mus musculus (Mouse).